Here is a 336-residue protein sequence, read N- to C-terminus: Homeobox-leucine zipper protein HAT14 (336 aa).

Disordered regions lie at residues 53 to 141 (RSLS…PDSV) and 160 to 194 (SNKR…KLRL). A compositionally biased stretch (basic and acidic residues) spans 64–81 (EDEKKKPAPRAKKSDEFR). A compositionally biased stretch (acidic residues) spans 120–129 (VEEEEEEEEA). Residues 130–141 (VPSMSVSPPDSV) show a composition bias toward low complexity. Basic and acidic residues predominate over residues 160–173 (SNKRDIDDEVERSA). Residues 187–246 (STRKKLRLSKDQSAFLEDSFKEHSTLNPKQKIALAKQLNLRPRQVEVWFQNRRARTKLKQ) constitute a DNA-binding region (homeobox). A leucine-zipper region spans residues 254–275 (LKRCCESLTEENRRLQKEVKEL).

This sequence belongs to the HD-ZIP homeobox family. Class II subfamily.

The protein localises to the nucleus. Its function is as follows. Probable transcription factor. The chain is Homeobox-leucine zipper protein HAT14 (HAT14) from Arabidopsis thaliana (Mouse-ear cress).